Reading from the N-terminus, the 179-residue chain is MQTPVSVNEKKDFIRWFLNHYQLKRRECVWILNYLMSHDSLMEKVHFVEQAEFCPRGIIMSTHCVEEVPFRFYKENVMTTDAEKSFHDIRLNKQQDLFIQLNFRSAYNSPEYAAVLEANPHIPKDLYENEKDKIVAEQILEHSIATFQRQKLLREIDEALDRQDKESFEKLAKQLSQLR.

Belongs to the UPF0302 family.

This is UPF0302 protein BLi02393/BL02764 from Bacillus licheniformis (strain ATCC 14580 / DSM 13 / JCM 2505 / CCUG 7422 / NBRC 12200 / NCIMB 9375 / NCTC 10341 / NRRL NRS-1264 / Gibson 46).